The primary structure comprises 278 residues: Large ribosomal subunit protein uL2 (278 aa).

Positions 202–278 are disordered; that stretch reads ANINDGKAGR…IMRSRHQRKK (77 aa).

It belongs to the universal ribosomal protein uL2 family. As to quaternary structure, part of the 50S ribosomal subunit. Forms a bridge to the 30S subunit in the 70S ribosome.

One of the primary rRNA binding proteins. Required for association of the 30S and 50S subunits to form the 70S ribosome, for tRNA binding and peptide bond formation. It has been suggested to have peptidyltransferase activity; this is somewhat controversial. Makes several contacts with the 16S rRNA in the 70S ribosome. This Rhizobium johnstonii (strain DSM 114642 / LMG 32736 / 3841) (Rhizobium leguminosarum bv. viciae) protein is Large ribosomal subunit protein uL2.